A 469-amino-acid chain; its full sequence is A-type ATP synthase subunit B 3 (469 aa).

The protein belongs to the ATPase alpha/beta chains family. As to quaternary structure, has multiple subunits with at least A(3), B(3), C, D, E, F, H, I and proteolipid K(x).

The protein localises to the cell membrane. Functionally, component of the A-type ATP synthase that produces ATP from ADP in the presence of a proton gradient across the membrane. The B chain is a regulatory subunit. This Methanospirillum hungatei JF-1 (strain ATCC 27890 / DSM 864 / NBRC 100397 / JF-1) protein is A-type ATP synthase subunit B 3.